Consider the following 394-residue polypeptide: LL-diaminopimelate aminotransferase (394 aa).

Substrate contacts are provided by Tyr14 and Gly41. Pyridoxal 5'-phosphate contacts are provided by residues Tyr71, 104-105 (AK), Tyr128, Asn174, Tyr205, and 233-235 (SFS). Lys105, Tyr128, and Asn174 together coordinate substrate. Lys236 bears the N6-(pyridoxal phosphate)lysine mark. Residues Arg244 and Asn275 each coordinate pyridoxal 5'-phosphate. Substrate is bound by residues Asn275 and Arg369.

It belongs to the class-I pyridoxal-phosphate-dependent aminotransferase family. LL-diaminopimelate aminotransferase subfamily. In terms of assembly, homodimer. The cofactor is pyridoxal 5'-phosphate.

It carries out the reaction (2S,6S)-2,6-diaminopimelate + 2-oxoglutarate = (S)-2,3,4,5-tetrahydrodipicolinate + L-glutamate + H2O + H(+). It participates in amino-acid biosynthesis; L-lysine biosynthesis via DAP pathway; LL-2,6-diaminopimelate from (S)-tetrahydrodipicolinate (aminotransferase route): step 1/1. Functionally, involved in the synthesis of meso-diaminopimelate (m-DAP or DL-DAP), required for both lysine and peptidoglycan biosynthesis. Catalyzes the direct conversion of tetrahydrodipicolinate to LL-diaminopimelate. This chain is LL-diaminopimelate aminotransferase, found in Chlamydia trachomatis serovar L2b (strain UCH-1/proctitis).